The following is a 451-amino-acid chain: Tubulin alpha-3 chain (451 aa).

Position 11 (Q11) interacts with GTP. K40 carries the post-translational modification N6-acetyllysine. Residues E71, S140, G144, T145, T179, N206, and N228 each contribute to the GTP site. A Mg(2+)-binding site is contributed by E71. E254 is an active-site residue.

This sequence belongs to the tubulin family. As to quaternary structure, dimer of alpha and beta chains. A typical microtubule is a hollow water-filled tube with an outer diameter of 25 nm and an inner diameter of 15 nM. Alpha-beta heterodimers associate head-to-tail to form protofilaments running lengthwise along the microtubule wall with the beta-tubulin subunit facing the microtubule plus end conferring a structural polarity. Microtubules usually have 13 protofilaments but different protofilament numbers can be found in some organisms and specialized cells. Mg(2+) is required as a cofactor. In terms of processing, undergoes a tyrosination/detyrosination cycle, the cyclic removal and re-addition of a C-terminal tyrosine residue by the enzymes tubulin tyrosine carboxypeptidase (TTCP) and tubulin tyrosine ligase (TTL), respectively. Acetylation of alpha chains at Lys-40 stabilizes microtubules and affects affinity and processivity of microtubule motors. This modification has a role in multiple cellular functions, ranging from cell motility, cell cycle progression or cell differentiation to intracellular trafficking and signaling.

Its subcellular location is the cytoplasm. The protein localises to the cytoskeleton. The enzyme catalyses GTP + H2O = GDP + phosphate + H(+). Its function is as follows. Tubulin is the major constituent of microtubules, a cylinder consisting of laterally associated linear protofilaments composed of alpha- and beta-tubulin heterodimers. Microtubules grow by the addition of GTP-tubulin dimers to the microtubule end, where a stabilizing cap forms. Below the cap, tubulin dimers are in GDP-bound state, owing to GTPase activity of alpha-tubulin. This Homarus americanus (American lobster) protein is Tubulin alpha-3 chain.